The following is a 250-amino-acid chain: Probable phosphatase VPA1527 (250 aa).

Residues His8, His10, His16, His41, Glu74, His102, His132, Asp194, and His196 each coordinate Zn(2+).

It belongs to the PHP family. The cofactor is Zn(2+).

This is Probable phosphatase VPA1527 from Vibrio parahaemolyticus serotype O3:K6 (strain RIMD 2210633).